A 509-amino-acid polypeptide reads, in one-letter code: Transmembrane protein 102 (509 aa).

Topologically, residues Met1–Arg312 are extracellular. The disordered stretch occupies residues Pro167–Thr236. Over residues Asp174–Pro204 the composition is skewed to basic and acidic residues. Over residues Ser207–Asp224 the composition is skewed to low complexity. A helical transmembrane segment spans residues His313–Pro329. Topologically, residues Asp330–His509 are cytoplasmic.

In terms of assembly, interacts with CSF2RB; this interaction occurs preferentially in the absence of CSF2.

Its subcellular location is the cell membrane. In terms of biological role, selectively involved in CSF2 deprivation-induced apoptosis via a mitochondria-dependent pathway. In Mus musculus (Mouse), this protein is Transmembrane protein 102 (Tmem102).